The primary structure comprises 418 residues: Serine hydroxymethyltransferase (418 aa).

(6S)-5,6,7,8-tetrahydrofolate-binding positions include L120 and 124-126 (GHL). The residue at position 229 (K229) is an N6-(pyridoxal phosphate)lysine. 353 to 355 (SPF) contacts (6S)-5,6,7,8-tetrahydrofolate.

It belongs to the SHMT family. As to quaternary structure, homodimer. Pyridoxal 5'-phosphate serves as cofactor.

Its subcellular location is the cytoplasm. It carries out the reaction (6R)-5,10-methylene-5,6,7,8-tetrahydrofolate + glycine + H2O = (6S)-5,6,7,8-tetrahydrofolate + L-serine. The protein operates within one-carbon metabolism; tetrahydrofolate interconversion. Its pathway is amino-acid biosynthesis; glycine biosynthesis; glycine from L-serine: step 1/1. In terms of biological role, catalyzes the reversible interconversion of serine and glycine with tetrahydrofolate (THF) serving as the one-carbon carrier. This reaction serves as the major source of one-carbon groups required for the biosynthesis of purines, thymidylate, methionine, and other important biomolecules. Also exhibits THF-independent aldolase activity toward beta-hydroxyamino acids, producing glycine and aldehydes, via a retro-aldol mechanism. The sequence is that of Serine hydroxymethyltransferase from Psychrobacter cryohalolentis (strain ATCC BAA-1226 / DSM 17306 / VKM B-2378 / K5).